The primary structure comprises 65 residues: Ferredoxin soy (65 aa).

Residues 2-29 (GVQVDKERCVGAGMCALTAPDVFTQDDD) form the 4Fe-4S ferredoxin-type domain. Residues Cys-10, Cys-16, and Cys-55 each coordinate [3Fe-4S] cluster.

The cofactor is [3Fe-4S] cluster.

Electron transport protein for the cytochrome P-450-SOY system. The chain is Ferredoxin soy (soyB) from Streptomyces griseus.